A 354-amino-acid polypeptide reads, in one-letter code: MPHRSLRATVVLLLVILKKQPSSSAPLNGSKWTYVGPAGEKNWSKKYPSCGGLLQSPIDLHSDILQYDASLAPLQFQGYNVSVEKLLNLTNDGHSVRLNLNSDMYIQGLQPHHYRAEQLHLHWGNRNDPHGSEHTVSGKHFAAELHIVHYNSDLYPDFSTASDKSEGLAVLAVLIEIGSANPSYDKIFSHLQHVKYKGQQVLIPGFNIEELLPESPGEYYRYEGSLTTPPCYPTVLWTVFRNPVQISQEQLLALETALYFTHMDDPTPREMINNFRQVQKFDERLVYISFRQGLLTDTGLSLGIILSVALAGVLGISIVLAVSIWLFKRKKSKKGDNKGVIYKPAIKKEAEVHA.

The signal sequence occupies residues 1-24; that stretch reads MPHRSLRATVVLLLVILKKQPSSS. At 25 to 301 the chain is on the extracellular side; the sequence is APLNGSKWTY…QGLLTDTGLS (277 aa). N28, N42, N80, and N88 each carry an N-linked (GlcNAc...) asparagine glycan. The Alpha-carbonic anhydrase domain maps to 30-290; the sequence is SKWTYVGPAG…FDERLVYISF (261 aa). A disulfide bond links C50 and C231. H94 (proton donor/acceptor) is an active-site residue. The Zn(2+) site is built by H120, H122, and H146. Position 227 to 228 (227 to 228) interacts with substrate; sequence TT. A helical transmembrane segment spans residues 302–322; sequence LGIILSVALAGVLGISIVLAV. The Cytoplasmic segment spans residues 323 to 354; that stretch reads SIWLFKRKKSKKGDNKGVIYKPAIKKEAEVHA.

Belongs to the alpha-carbonic anhydrase family. Homodimer. Zn(2+) serves as cofactor.

The protein localises to the membrane. Its subcellular location is the cell membrane. The catalysed reaction is hydrogencarbonate + H(+) = CO2 + H2O. Its activity is regulated as follows. Inhibited by acetazolamide. Its function is as follows. Reversible hydration of carbon dioxide. The protein is Carbonic anhydrase 12 of Mus musculus (Mouse).